Reading from the N-terminus, the 63-residue chain is Toxin S6C6 (63 aa).

5 disulfide bridges follow: Cys-3-Cys-24, Cys-6-Cys-11, Cys-17-Cys-39, Cys-43-Cys-55, and Cys-56-Cys-61.

The protein belongs to the three-finger toxin family. Ancestral subfamily. Orphan group XIX sub-subfamily. As to expression, expressed by the venom gland.

The protein resides in the secreted. Functionally, may enhance presynaptic acetylcholine release. This chain is Toxin S6C6, found in Dendroaspis jamesoni kaimosae (Eastern Jameson's mamba).